The primary structure comprises 255 residues: 14-3-3 protein 5 (255 aa).

This sequence belongs to the 14-3-3 family. In terms of assembly, homodimer.

The protein is 14-3-3 protein 5 (TFT5) of Solanum lycopersicum (Tomato).